The sequence spans 64 residues: MRYDNVKPCPFCGCPSVTVKAISGYYRAKCNGCESRTGYGGSEKEALERWNKRTTGNNNGGVHV.

Ca(2+) serves as cofactor. Requires Mg(2+) as cofactor.

Its activity is regulated as follows. Inhibited by EDTA. Toxic component of a type I toxin-antitoxin (TA) system. Upon overexpression inhibits growth and reduces colony-forming units in both the presence and absence of the Rac prophage, cells become filamentous. Has deoxyribonuclease activity (probably endonucleolytic), does not digest RNA. Its toxic effects are neutralized by sRNA antitoxin RalA, which is encoded in trans on the opposite DNA strand. Has RAL-like activity. The protein is Endodeoxyribonuclease toxin RalR (ralR) of Escherichia coli (strain K12).